Here is a 462-residue protein sequence, read N- to C-terminus: BPI fold-containing family B member 2 (462 aa).

Residues 1 to 22 form the signal peptide; the sequence is MARACSLGLLLLLLLLLRTVVT. Threonine 55 is subject to Phosphothreonine. Position 63 is a phosphoserine (serine 63). A glycan (N-linked (GlcNAc...) asparagine) is linked at asparagine 99. The cysteines at positions 140 and 177 are disulfide-linked. Residues asparagine 297 and asparagine 336 are each glycosylated (N-linked (GlcNAc...) asparagine).

It belongs to the BPI/LBP/Plunc superfamily. BPI/LBP family.

The protein resides in the secreted. The protein is BPI fold-containing family B member 2 (Bpifb2) of Mus musculus (Mouse).